We begin with the raw amino-acid sequence, 187 residues long: Protein GrpE (187 aa).

The tract at residues 1-30 (MEKKETKNETEKTNKQDNKNTKSQKKENLN) is disordered.

Belongs to the GrpE family. In terms of assembly, homodimer.

Its subcellular location is the cytoplasm. In terms of biological role, participates actively in the response to hyperosmotic and heat shock by preventing the aggregation of stress-denatured proteins, in association with DnaK and GrpE. It is the nucleotide exchange factor for DnaK and may function as a thermosensor. Unfolded proteins bind initially to DnaJ; upon interaction with the DnaJ-bound protein, DnaK hydrolyzes its bound ATP, resulting in the formation of a stable complex. GrpE releases ADP from DnaK; ATP binding to DnaK triggers the release of the substrate protein, thus completing the reaction cycle. Several rounds of ATP-dependent interactions between DnaJ, DnaK and GrpE are required for fully efficient folding. The sequence is that of Protein GrpE from Borreliella afzelii (strain PKo) (Borrelia afzelii).